The sequence spans 217 residues: Cytidylate kinase (217 aa).

21 to 29 (GPAASGKGT) lines the ATP pocket.

Belongs to the cytidylate kinase family. Type 1 subfamily.

It is found in the cytoplasm. The enzyme catalyses CMP + ATP = CDP + ADP. It carries out the reaction dCMP + ATP = dCDP + ADP. This chain is Cytidylate kinase, found in Rickettsia bellii (strain OSU 85-389).